A 227-amino-acid chain; its full sequence is Lysosomal-associated transmembrane protein 4B (227 aa).

The next 4 membrane-spanning stretches (helical) occupy residues 26-46 (ILLG…LLSA), 72-92 (MCIA…ATYG), 100-120 (WIIP…LVAI), and 153-173 (CLVL…GYLI). A required for NEDD4 interaction region spans residues 205–222 (PPYDDATAVPSTAKEPPP).

Belongs to the LAPTM4/LAPTM5 transporter family. In terms of assembly, homooligomer; upon reaching the lysosomes. Interacts with MCOLN1. Interacts with NEDD4; may play a role in the lysosomal sorting of LAPTM4B; enhances HGS association with NEDD4; mediates inhibition of EGFR degradation. Interacts with PIP5K1C; promotes SNX5 association with LAPTM4B; kinase activity of PIP5K1C is required; interaction is regulated by phosphatidylinositol 4,5-bisphosphate generated by PIP5K1C. Interacts with HGS; promotes HGS ubiquitination. Interacts with SNX5. Interacts with SLC3A2 and SLC7A5; recruits SLC3A2 and SLC7A5 to lysosomes to promote leucine uptake into these organelles and is required for mTORC1 activation. Interacts with LRRC32; decreases TGFB1 production in regulatory T cells. Interacts with BECN1; competes with EGFR for LAPTM4B binding; regulates EGFR activity. Interacts with EGFR; positively correlates with EGFR activation. Post-translationally, undergoes proteolytic cleavage following delivery to the lysosomes. In terms of processing, ubiquitinated by NEDD4.

Its subcellular location is the endomembrane system. It localises to the late endosome membrane. The protein localises to the cell membrane. It is found in the cell projection. The protein resides in the lysosome membrane. Its subcellular location is the endosome membrane. It localises to the endosome. The protein localises to the multivesicular body membrane. It is found in the multivesicular body lumen. Functionally, required for optimal lysosomal function. Blocks EGF-stimulated EGFR intraluminal sorting and degradation. Conversely by binding with the phosphatidylinositol 4,5-bisphosphate, regulates its PIP5K1C interaction, inhibits HGS ubiquitination and relieves LAPTM4B inhibition of EGFR degradation. Recruits SLC3A2 and SLC7A5 (the Leu transporter) to the lysosome, promoting entry of leucine and other essential amino acid (EAA) into the lysosome, stimulating activation of proton-transporting vacuolar (V)-ATPase protein pump (V-ATPase) and hence mTORC1 activation. Plays a role as negative regulator of TGFB1 production in regulatory T cells. Binds ceramide and facilitates its exit from late endosome in order to control cell death pathways. The polypeptide is Lysosomal-associated transmembrane protein 4B (Mus musculus (Mouse)).